The sequence spans 197 residues: Small ribosomal subunit protein uS4c (197 aa).

One can recognise an S4 RNA-binding domain in the interval 85–157; the sequence is MRLDNILFRL…LQLFTGKELA (73 aa).

Belongs to the universal ribosomal protein uS4 family. As to quaternary structure, part of the 30S ribosomal subunit. Contacts protein S5. The interaction surface between S4 and S5 is involved in control of translational fidelity.

Its subcellular location is the plastid. Its function is as follows. One of the primary rRNA binding proteins, it binds directly to 16S rRNA where it nucleates assembly of the body of the 30S subunit. With S5 and S12 plays an important role in translational accuracy. In Cuscuta gronovii (Common dodder), this protein is Small ribosomal subunit protein uS4c (rps4).